We begin with the raw amino-acid sequence, 199 residues long: Recombination protein RecR (199 aa).

A C4-type zinc finger spans residues 57–72 (CQSCRTFTEETYCPIC). Residues 81-176 (DIICVVETPA…MVSRIAHGVP (96 aa)) enclose the Toprim domain.

Belongs to the RecR family.

In terms of biological role, may play a role in DNA repair. It seems to be involved in an RecBC-independent recombinational process of DNA repair. It may act with RecF and RecO. In Shewanella halifaxensis (strain HAW-EB4), this protein is Recombination protein RecR.